The chain runs to 654 residues: Glutamyl-tRNA(Gln) amidotransferase subunit B, mitochondrial (654 aa).

Residues 1–8 constitute a mitochondrion transit peptide; it reads MGRIPTRE. The disordered stretch occupies residues 79–101; the sequence is DQAKASKAQAKGKKKRSSADNQT.

Belongs to the GatB/GatE family. GatB subfamily. In terms of assembly, subunit of the heterotrimeric GatCAB amidotransferase (AdT) complex, composed of A, B and C subunits.

Its subcellular location is the mitochondrion. The enzyme catalyses L-glutamyl-tRNA(Gln) + L-glutamine + ATP + H2O = L-glutaminyl-tRNA(Gln) + L-glutamate + ADP + phosphate + H(+). Its function is as follows. Allows the formation of correctly charged Gln-tRNA(Gln) through the transamidation of misacylated Glu-tRNA(Gln) in the mitochondria. The reaction takes place in the presence of glutamine and ATP through an activated gamma-phospho-Glu-tRNA(Gln). The sequence is that of Glutamyl-tRNA(Gln) amidotransferase subunit B, mitochondrial from Pyricularia oryzae (strain 70-15 / ATCC MYA-4617 / FGSC 8958) (Rice blast fungus).